The sequence spans 134 residues: ATP synthase epsilon chain, chloroplastic (134 aa).

The protein belongs to the ATPase epsilon chain family. F-type ATPases have 2 components, CF(1) - the catalytic core - and CF(0) - the membrane proton channel. CF(1) has five subunits: alpha(3), beta(3), gamma(1), delta(1), epsilon(1). CF(0) has three main subunits: a, b and c.

It is found in the plastid. The protein localises to the chloroplast thylakoid membrane. Produces ATP from ADP in the presence of a proton gradient across the membrane. In Spinacia oleracea (Spinach), this protein is ATP synthase epsilon chain, chloroplastic.